The chain runs to 232 residues: NAD(P)H-quinone oxidoreductase subunit K 1 (232 aa).

4 residues coordinate [4Fe-4S] cluster: cysteine 49, cysteine 50, cysteine 114, and cysteine 145.

Belongs to the complex I 20 kDa subunit family. In terms of assembly, NDH-1 can be composed of about 15 different subunits; different subcomplexes with different compositions have been identified which probably have different functions. [4Fe-4S] cluster serves as cofactor.

It is found in the cell inner membrane. It catalyses the reaction a plastoquinone + NADH + (n+1) H(+)(in) = a plastoquinol + NAD(+) + n H(+)(out). The catalysed reaction is a plastoquinone + NADPH + (n+1) H(+)(in) = a plastoquinol + NADP(+) + n H(+)(out). NDH-1 shuttles electrons from an unknown electron donor, via FMN and iron-sulfur (Fe-S) centers, to quinones in the respiratory and/or the photosynthetic chain. The immediate electron acceptor for the enzyme in this species is believed to be plastoquinone. Couples the redox reaction to proton translocation, and thus conserves the redox energy in a proton gradient. Cyanobacterial NDH-1 also plays a role in inorganic carbon-concentration. In Gloeobacter violaceus (strain ATCC 29082 / PCC 7421), this protein is NAD(P)H-quinone oxidoreductase subunit K 1.